The chain runs to 510 residues: 2,3-bisphosphoglycerate-independent phosphoglycerate mutase (510 aa).

Mn(2+)-binding residues include aspartate 14 and serine 64. Serine 64 functions as the Phosphoserine intermediate in the catalytic mechanism. Substrate is bound by residues histidine 125, 155-156 (RD), arginine 187, arginine 193, 259-262 (RADR), and lysine 332. Positions 399, 403, 440, 441, and 459 each coordinate Mn(2+).

The protein belongs to the BPG-independent phosphoglycerate mutase family. In terms of assembly, monomer. Mn(2+) is required as a cofactor.

The enzyme catalyses (2R)-2-phosphoglycerate = (2R)-3-phosphoglycerate. Its pathway is carbohydrate degradation; glycolysis; pyruvate from D-glyceraldehyde 3-phosphate: step 3/5. Its function is as follows. Catalyzes the interconversion of 2-phosphoglycerate and 3-phosphoglycerate. This is 2,3-bisphosphoglycerate-independent phosphoglycerate mutase from Pseudomonas syringae pv. syringae (strain B728a).